The sequence spans 152 residues: SXP/RAL-2 family protein Ani s 5 (152 aa).

The signal sequence occupies residues 1-18; it reads MKTLIVAALFCTIGMALA. 4 necessary for IgE-binding regions span residues 25 to 42, 49 to 54, 58 to 66, and 103 to 120; these read PPFL…FFEL, KTDPEI, LDAWVDTLG, and KKAD…SLNG. IgG4-binding stretches follow at residues 49 to 68 and 118 to 137; these read KTDP…LGGD and LNGI…LPQS. Residues 127–146 form an igE-binding and IgG4-binding region; sequence IQAIYKTLPQSVKDELEKGI.

Belongs to the SXP/RAL-2 family. In terms of assembly, monomer. In terms of tissue distribution, excretory gland, ventriculus, and the luminal epithelium of the intestine of the larvae.

It is found in the secreted. The sequence is that of SXP/RAL-2 family protein Ani s 5 from Anisakis simplex (Herring worm).